The sequence spans 344 residues: Protein pelota homolog (344 aa).

It belongs to the eukaryotic release factor 1 family. Pelota subfamily. In terms of assembly, monomer. The cofactor is a divalent metal cation.

The protein localises to the cytoplasm. Its function is as follows. May function in recognizing stalled ribosomes, interact with stem-loop structures in stalled mRNA molecules, and effect endonucleolytic cleavage of the mRNA. May play a role in the release non-functional ribosomes and degradation of damaged mRNAs. Has endoribonuclease activity. This chain is Protein pelota homolog, found in Archaeoglobus fulgidus (strain ATCC 49558 / DSM 4304 / JCM 9628 / NBRC 100126 / VC-16).